The chain runs to 1126 residues: Carbamoyl phosphate synthase large chain (1126 aa).

The segment at 1 to 402 is carboxyphosphate synthetic domain; that stretch reads MPKRTDIKSV…SLGKAMRSID (402 aa). Residues Arg129, Arg169, Gly175, Gly176, Glu208, Ile210, Glu215, Gly241, Val242, His243, Gln285, and Glu299 each coordinate ATP. An ATP-grasp 1 domain is found at 133–328; it reads KKVVEEAGAE…IAKIATKLAL (196 aa). Mg(2+) contacts are provided by Gln285, Glu299, and Asn301. Mn(2+)-binding residues include Gln285, Glu299, and Asn301. Residues 403 to 551 are oligomerization domain; the sequence is KRHMGFNWDG…YYYSCYADET (149 aa). The segment at 552 to 962 is carbamoyl phosphate synthetic domain; the sequence is ELRPRDREAV…AFAKSQLAAY (411 aa). Residues 681 to 881 form the ATP-grasp 2 domain; that stretch reads GEVLKKADMN…LAKAAARIMV (201 aa). ATP contacts are provided by Arg717, Lys765, Leu767, Glu772, Gly797, Val798, His799, Ser800, Gln840, and Glu852. Residues Gln840, Glu852, and Asn854 each coordinate Mg(2+). Mn(2+) is bound by residues Gln840, Glu852, and Asn854. An allosteric domain region spans residues 963–1126; sequence EGGLPTSGNV…TQLFELESRD (164 aa). The region spanning 964 to 1126 is the MGS-like domain; sequence GGLPTSGNVF…TQLFELESRD (163 aa).

Belongs to the CarB family. Composed of two chains; the small (or glutamine) chain promotes the hydrolysis of glutamine to ammonia, which is used by the large (or ammonia) chain to synthesize carbamoyl phosphate. Tetramer of heterodimers (alpha,beta)4. Mg(2+) is required as a cofactor. It depends on Mn(2+) as a cofactor.

The catalysed reaction is hydrogencarbonate + L-glutamine + 2 ATP + H2O = carbamoyl phosphate + L-glutamate + 2 ADP + phosphate + 2 H(+). It catalyses the reaction hydrogencarbonate + NH4(+) + 2 ATP = carbamoyl phosphate + 2 ADP + phosphate + 2 H(+). The protein operates within amino-acid biosynthesis; L-arginine biosynthesis; carbamoyl phosphate from bicarbonate: step 1/1. Its pathway is pyrimidine metabolism; UMP biosynthesis via de novo pathway; (S)-dihydroorotate from bicarbonate: step 1/3. Functionally, large subunit of the glutamine-dependent carbamoyl phosphate synthetase (CPSase). CPSase catalyzes the formation of carbamoyl phosphate from the ammonia moiety of glutamine, carbonate, and phosphate donated by ATP, constituting the first step of 2 biosynthetic pathways, one leading to arginine and/or urea and the other to pyrimidine nucleotides. The large subunit (synthetase) binds the substrates ammonia (free or transferred from glutamine from the small subunit), hydrogencarbonate and ATP and carries out an ATP-coupled ligase reaction, activating hydrogencarbonate by forming carboxy phosphate which reacts with ammonia to form carbamoyl phosphate. The polypeptide is Carbamoyl phosphate synthase large chain (Bifidobacterium adolescentis (strain ATCC 15703 / DSM 20083 / NCTC 11814 / E194a)).